A 466-amino-acid chain; its full sequence is Probable ribonuclease FAU-1 (466 aa).

Residues Gly90–Thr152 enclose the S1 motif domain.

Belongs to the FAU-1 family.

In terms of biological role, probable RNase involved in rRNA stability through maturation and/or degradation of precursor rRNAs. Binds to RNA in loop regions with AU-rich sequences. The sequence is that of Probable ribonuclease FAU-1 from Haloarcula marismortui (strain ATCC 43049 / DSM 3752 / JCM 8966 / VKM B-1809) (Halobacterium marismortui).